Consider the following 447-residue polypeptide: Maltoporin (447 aa).

An N-terminal signal peptide occupies residues 1–26 (MELRMKKVSVIAAAVAATLAAGSAFA).

Belongs to the porin LamB (TC 1.B.3) family. Homotrimer formed of three 18-stranded antiparallel beta-barrels, containing three independent channels.

The protein resides in the cell outer membrane. It catalyses the reaction beta-maltose(in) = beta-maltose(out). In terms of biological role, involved in the transport of maltose and maltodextrins. The protein is Maltoporin of Vibrio campbellii (strain ATCC BAA-1116).